A 1297-amino-acid chain; its full sequence is Phosphoribosylformylglycinamidine synthase (1297 aa).

The segment at 301–329 (TAISPFPGAATGSGGEIRDEGATGRGAKP) is disordered. Residue 308–319 (GAATGSGGEIRD) coordinates ATP. Residues aspartate 680, glutamate 719, asparagine 723, and aspartate 887 each coordinate Mg(2+). Residue serine 889 participates in ATP binding. Residues 1045-1297 (IAILREQGVN…RLFRNARMVF (253 aa)) enclose the Glutamine amidotransferase type-1 domain. Cysteine 1138 serves as the catalytic Nucleophile. Residues histidine 1263 and glutamate 1265 contribute to the active site.

This sequence in the N-terminal section; belongs to the FGAMS family. As to quaternary structure, monomer.

The protein resides in the cytoplasm. It carries out the reaction N(2)-formyl-N(1)-(5-phospho-beta-D-ribosyl)glycinamide + L-glutamine + ATP + H2O = 2-formamido-N(1)-(5-O-phospho-beta-D-ribosyl)acetamidine + L-glutamate + ADP + phosphate + H(+). Its pathway is purine metabolism; IMP biosynthesis via de novo pathway; 5-amino-1-(5-phospho-D-ribosyl)imidazole from N(2)-formyl-N(1)-(5-phospho-D-ribosyl)glycinamide: step 1/2. In terms of biological role, phosphoribosylformylglycinamidine synthase involved in the purines biosynthetic pathway. Catalyzes the ATP-dependent conversion of formylglycinamide ribonucleotide (FGAR) and glutamine to yield formylglycinamidine ribonucleotide (FGAM) and glutamate. This is Phosphoribosylformylglycinamidine synthase from Haemophilus influenzae (strain ATCC 51907 / DSM 11121 / KW20 / Rd).